Reading from the N-terminus, the 262-residue chain is Apolipoprotein A-I-2 (262 aa).

Positions 1 to 18 (MQFLALALTILLAAATQA) are cleaved as a signal peptide. Residues 32 to 63 (VKVAMMEYMAQVKETAQRSIDHLDDTEYKEYK) are 3 X approximate tandem repeats. A run of 2 repeats spans residues 64 to 85 (VQLSQSLDNLQQYAQTASESLA) and 87 to 107 (YSEAIGVQLTEATAAVRAEVM). The segment at 64 to 262 (VQLSQSLDNL…YETISQAMKA (199 aa)) is 10 X approximate tandem repeats. One copy of the 3; half-length repeat lies at 108–118 (KDVEELRSQLE). 5 repeat units span residues 119 to 140 (PKRAELKEVLDKHIDEYRKRLE), 141 to 162 (PLIKDIVEQRRTELEAFRVKIE), 163 to 184 (PVVEEMRAKVSANVEETKAKLM), 185 to 206 (PIVETVRAKLTERLEELRTLAS), and 207 to 228 (PYAEEYKEQMVKAVGEVREKVV). One copy of the 9; half-length repeat lies at 229–239 (PLTTDFKGQLG). The stretch at 240-262 (PAAEQAKEKLMALYETISQAMKA) is repeat 10.

Belongs to the apolipoprotein A1/A4/E family.

It is found in the secreted. In terms of biological role, participates in the reverse transport of cholesterol from tissues to the liver for excretion by promoting cholesterol efflux from tissues and by acting as a cofactor for the lecithin cholesterol acyltransferase (LCAT). The sequence is that of Apolipoprotein A-I-2 from Oncorhynchus mykiss (Rainbow trout).